The chain runs to 448 residues: C4-dicarboxylate transport protein (448 aa).

Helical transmembrane passes span 20–38, 53–75, 88–110, 161–178, 199–220, 230–252, 325–347, and 362–384; these read LYFQ…GHFY, IRLV…IAGM, AMIY…ANTV, ILQV…LGIV, LVAI…FTIG, LAML…LGAV, LFIA…LLVA, and FITL…ALIL.

The protein belongs to the dicarboxylate/amino acid:cation symporter (DAACS) (TC 2.A.23) family.

The protein localises to the cell inner membrane. Functionally, responsible for the transport of dicarboxylates such as succinate, fumarate, and malate from the periplasm across the membrane. In Agrobacterium fabrum (strain C58 / ATCC 33970) (Agrobacterium tumefaciens (strain C58)), this protein is C4-dicarboxylate transport protein.